We begin with the raw amino-acid sequence, 176 residues long: Ribosome maturation factor RimM (176 aa).

A PRC barrel domain is found at 99–173 (KEGEFHLVDL…WLLIKPPPGL (75 aa)).

The protein belongs to the RimM family. As to quaternary structure, binds ribosomal protein uS19.

It localises to the cytoplasm. Functionally, an accessory protein needed during the final step in the assembly of 30S ribosomal subunit, possibly for assembly of the head region. Essential for efficient processing of 16S rRNA. May be needed both before and after RbfA during the maturation of 16S rRNA. It has affinity for free ribosomal 30S subunits but not for 70S ribosomes. The chain is Ribosome maturation factor RimM from Prochlorococcus marinus (strain MIT 9211).